We begin with the raw amino-acid sequence, 239 residues long: LexA repressor (239 aa).

The H-T-H motif DNA-binding region spans 26-46; that stretch reads FDEMKDALDLASKSGIHRLIT. Residues Ser159 and Lys197 each act as for autocatalytic cleavage activity in the active site.

It belongs to the peptidase S24 family. In terms of assembly, homodimer.

It carries out the reaction Hydrolysis of Ala-|-Gly bond in repressor LexA.. In terms of biological role, represses a number of genes involved in the response to DNA damage (SOS response), including recA and lexA. In the presence of single-stranded DNA, RecA interacts with LexA causing an autocatalytic cleavage which disrupts the DNA-binding part of LexA, leading to derepression of the SOS regulon and eventually DNA repair. The polypeptide is LexA repressor (Rhizobium etli (strain ATCC 51251 / DSM 11541 / JCM 21823 / NBRC 15573 / CFN 42)).